We begin with the raw amino-acid sequence, 318 residues long: Dimethyladenosine transferase (318 aa).

Histidine 37, leucine 39, glycine 64, glutamate 85, aspartate 113, and asparagine 128 together coordinate S-adenosyl-L-methionine.

It belongs to the class I-like SAM-binding methyltransferase superfamily. rRNA adenine N(6)-methyltransferase family.

Its subcellular location is the cytoplasm. It localises to the nucleus. The protein resides in the nucleolus. The enzyme catalyses adenosine(1779)/adenosine(1780) in 18S rRNA + 4 S-adenosyl-L-methionine = N(6)-dimethyladenosine(1779)/N(6)-dimethyladenosine(1780) in 18S rRNA + 4 S-adenosyl-L-homocysteine + 4 H(+). Specifically dimethylates two adjacent adenosines in the loop of a conserved hairpin near the 3'-end of 18S rRNA in the 40S particle. This Saccharomyces cerevisiae (strain ATCC 204508 / S288c) (Baker's yeast) protein is Dimethyladenosine transferase.